Here is a 659-residue protein sequence, read N- to C-terminus: Protein SCARECROW 1 (659 aa).

Disordered regions lie at residues 1 to 33 (MGSS…ITSL) and 188 to 285 (SDPA…KQRD). Residues 190–228 (PAPPPPPPPSHPALLPPDATAPPPPPTSVAALPPPPPPQ) show a composition bias toward pro residues. Positions 258 to 271 (AAAAAAAAAAALAA) are enriched in low complexity. Positions 258–289 (AAAAAAAAAAALAAAKERKEEQRRKQRDEEGL) form a coiled coil. Positions 272 to 285 (AKERKEEQRRKQRD) are enriched in basic and acidic residues. The GRAS domain occupies 282–652 (KQRDEEGLHL…LCLLTASAWR (371 aa)). Positions 289–353 (LHLLTLLLQC…VSSCLGLYAP (65 aa)) are leucine repeat I (LRI). Positions 296–300 (LQCAE) match the LxCxE motif motif. A VHIID region spans residues 372 to 437 (FQVFNGISPF…GGPPRVRLTG (66 aa)). The VHIID signature appears at 403–407 (VHIID). The leucine repeat II (LRII) stretch occupies residues 447–479 (ATGKRLSDFADTLGLPFEFCPVADKAGNLDPEK). Residues 488-575 (VAVHWLRHSL…QQLLSREIRN (88 aa)) form a PFYRE region. The interval 578–652 (AVGGPARTGD…LCLLTASAWR (75 aa)) is SAW.

Belongs to the GRAS family. In terms of assembly, interacts with SHR1, but not with SHR2.

Its subcellular location is the nucleus. Transcription factor required for quiescent center cells specification and maintenance of surrounding stem cells, and for the asymmetric cell division involved in radial pattern formation in roots. Essential for cell division but not differentiation of the ground tissue. Regulates the radial organization of the shoot axial organs. Restricts SHR movment and sequesters it into the nucleus of the endodermis. In Oryza sativa subsp. indica (Rice), this protein is Protein SCARECROW 1 (SCR1).